A 228-amino-acid chain; its full sequence is DNA mismatch repair protein MutH (228 aa).

It belongs to the MutH family.

The protein localises to the cytoplasm. Functionally, sequence-specific endonuclease that cleaves unmethylated GATC sequences. It is involved in DNA mismatch repair. The protein is DNA mismatch repair protein MutH of Serratia proteamaculans (strain 568).